A 204-amino-acid chain; its full sequence is Large ribosomal subunit protein eL15 (204 aa).

Over residues 172–182 the composition is skewed to basic residues; the sequence is RGLRGRGHLHN. The segment at 172–204 is disordered; that stretch reads RGLRGRGHLHNKAPPSRRANWKRNQTLSLPRYR. Residues 193–204 show a composition bias toward polar residues; that stretch reads KRNQTLSLPRYR.

The protein belongs to the eukaryotic ribosomal protein eL15 family.

In Petunia hybrida (Petunia), this protein is Large ribosomal subunit protein eL15 (RPL15).